A 297-amino-acid polypeptide reads, in one-letter code: MAELTALESLIEMGFPKGRAEKALALTGNQGIEAAMDWLMEHEDDPDVDEPLATPLGHVLGREPTPSEQGGPKGPGSAVGEGKPVLTEEERQEQTKRMLELVAQKQREREEREEREALERERQRRRQGQELTAARQRLQEDEMRRAAEERRREKAEELEARQRVREKIERDKAERAKKYGGNVGSQPSPPATEPGPVPSSPSREPPTKREYDQCRIQVRLPDGTSLTQTFRAREQLAAVRLYVELHRGEELGGAQDPVQLLSGFPRRAFSEADMERPLQELGLVPSAVLIVAKKCPG.

At alanine 2 the chain carries N-acetylalanine. Residues 2-42 enclose the UBA domain; it reads AELTALESLIEMGFPKGRAEKALALTGNQGIEAAMDWLMEH. The interval 40 to 210 is disordered; that stretch reads MEHEDDPDVD…PSREPPTKRE (171 aa). The segment at 43-297 is interaction with BRCA1; it reads EDDPDVDEPL…VLIVAKKCPG (255 aa). Basic and acidic residues-rich tracts occupy residues 86–122 and 137–177; these read LTEE…ERER and RLQE…ERAK. Positions 86–176 form a coiled coil; the sequence is LTEEERQEQT…KIERDKAERA (91 aa). Residues 187-199 are compositionally biased toward pro residues; it reads PSPPATEPGPVPS. Residue serine 199 is modified to Phosphoserine. Serine 200 is subject to Phosphoserine; by MAPK12. A phosphothreonine mark is found at threonine 207 and threonine 229. A UBX domain is found at 209 to 291; that stretch reads REYDQCRIQV…GLVPSAVLIV (83 aa). Residue serine 270 is modified to Phosphoserine.

Component of a complex required to couple retrotranslocation, ubiquitination and deglycosylation composed of NGLY1, SAKS1, AMFR, VCP and RAD23B. Interacts with HOMER2. Interacts directly with VCP. Interacts with BRCA1 and BARD1; interaction takes place when BRCA1 is not autoubiquitinated bur is strongly enhanced in the presence of autoubiquitinated BRCA1.

It localises to the cytoplasm. In terms of biological role, ubiquitin-binding protein that interacts with the BRCA1-BARD1 heterodimer, and regulates its activity. Specifically binds 'Lys-6'-linked polyubiquitin chains. Interaction with autoubiquitinated BRCA1, leads to inhibit the E3 ubiquitin-protein ligase activity of the BRCA1-BARD1 heterodimer. Component of a complex required to couple deglycosylation and proteasome-mediated degradation of misfolded proteins in the endoplasmic reticulum that are retrotranslocated in the cytosol. The chain is UBX domain-containing protein 1 (UBXN1) from Bos taurus (Bovine).